The primary structure comprises 120 residues: NAD(P)H-quinone oxidoreductase subunit 3, chloroplastic (120 aa).

A run of 3 helical transmembrane segments spans residues 9-29 (IFWA…LISG), 64-84 (MFAL…PWAM), and 88-108 (VLGV…IVGS).

This sequence belongs to the complex I subunit 3 family. As to quaternary structure, NDH is composed of at least 16 different subunits, 5 of which are encoded in the nucleus.

The protein resides in the plastid. It localises to the chloroplast thylakoid membrane. The catalysed reaction is a plastoquinone + NADH + (n+1) H(+)(in) = a plastoquinol + NAD(+) + n H(+)(out). The enzyme catalyses a plastoquinone + NADPH + (n+1) H(+)(in) = a plastoquinol + NADP(+) + n H(+)(out). In terms of biological role, NDH shuttles electrons from NAD(P)H:plastoquinone, via FMN and iron-sulfur (Fe-S) centers, to quinones in the photosynthetic chain and possibly in a chloroplast respiratory chain. The immediate electron acceptor for the enzyme in this species is believed to be plastoquinone. Couples the redox reaction to proton translocation, and thus conserves the redox energy in a proton gradient. The chain is NAD(P)H-quinone oxidoreductase subunit 3, chloroplastic from Gossypium hirsutum (Upland cotton).